A 184-amino-acid polypeptide reads, in one-letter code: UPF0398 protein OB1025 (184 aa).

It belongs to the UPF0398 family.

The sequence is that of UPF0398 protein OB1025 from Oceanobacillus iheyensis (strain DSM 14371 / CIP 107618 / JCM 11309 / KCTC 3954 / HTE831).